The following is a 452-amino-acid chain: Zinc finger protein 277 (452 aa).

The segment at 200–224 (LMCLYCEKIFRDRPTLKEHMRKKGH) adopts a C2H2-type 1 zinc-finger fold. Residues 248-271 (APTPRKQHLQKRRRETASVSTVAD) form a disordered region. A compositionally biased stretch (basic residues) spans 252 to 261 (RKQHLQKRRR). The segment at 361–385 (LRCVTCDLQFDEEELLVEHMAQESH) adopts a C2H2-type 2 zinc-finger fold.

It belongs to the ZNF277 family. As to quaternary structure, interacts with components of the origin recognition complex (ORC) complex, Orc2 and Orc3, components of the SAGA transcription coactivator-HAT complex, Gcn5 and e(y)2, components of the mRNP biogenesis THO complex, thoc5 and e(y)2, and a component of the TFIID complex, TBP. Also interacts with polybromo, a component of the chromatin remodeling SWI/SNF complex.

It is found in the nucleus. Its subcellular location is the cytoplasm. Functionally, DNA binding protein which is involved in the positive regulation of both basal and inducible transcription. Mainly localizes to active promoter sites and interacts with components of various transcription and replication regulatory complexes, such as the ORC, SAGA, THO, TFIID and SWI/SNF complexes. It may therefore regulate transcription by promoting the association of these complexes to their binding sites. The chain is Zinc finger protein 277 from Drosophila melanogaster (Fruit fly).